A 143-amino-acid polypeptide reads, in one-letter code: Histone H2B.2, sperm (143 aa).

Positions 1–52 are disordered; sequence MPRSPSKSSPRKGSPRKGSPRKGSPKRGGKGAKRAGKGGRRRNVVKRRRRRR. 5 short sequence motifs (SPKK motif) span residues 4 to 7, 9 to 12, 14 to 17, 19 to 22, and 24 to 27; these read SPSK, SPRK, and SPKR. Residues 9-52 are compositionally biased toward basic residues; it reads SPRKGSPRKGSPRKGSPKRGGKGAKRAGKGGRRRNVVKRRRRRR. Residues serine 14, serine 19, and serine 24 each carry the phosphoserine modification. Serine 130 carries an O-linked (GlcNAc) serine glycan. Lysine 138 is covalently cross-linked (Glycyl lysine isopeptide (Lys-Gly) (interchain with G-Cter in ubiquitin)).

It belongs to the histone H2B family. In terms of assembly, the nucleosome is a histone octamer containing two molecules each of H2A, H2B, H3 and H4 assembled in one H3-H4 heterotetramer and two H2A-H2B heterodimers. The octamer wraps approximately 147 bp of DNA. Post-translationally, monoubiquitination of Lys-138 gives a specific tag for epigenetic transcriptional activation and is also prerequisite for histone H3 'Lys-4' and 'Lys-79' methylation. In terms of processing, phosphorylated on SPKK motifs 3, 4 and 5; which may regulate DNA binding. Dephosphorylated during maturation of spermatids to mature sperm and rephosphorylated at fertilization. GlcNAcylation at Ser-130 promotes monoubiquitination of Lys-138. It fluctuates in response to extracellular glucose, and associates with transcribed genes. In terms of tissue distribution, testis-specific.

It is found in the nucleus. The protein resides in the chromosome. Functionally, core component of nucleosome. Nucleosomes wrap and compact DNA into chromatin, limiting DNA accessibility to the cellular machineries which require DNA as a template. Histones thereby play a central role in transcription regulation, DNA repair, DNA replication and chromosomal stability. DNA accessibility is regulated via a complex set of post-translational modifications of histones, also called histone code, and nucleosome remodeling. This Lytechinus pictus (Painted sea urchin) protein is Histone H2B.2, sperm.